The following is a 1407-amino-acid chain: MKDLLKFLKAQTKTEEFDAIKIALASPDMIRSWSFGEVKKPETINYRTFKPERDGLFCARIFGPVKDYECLCGKYKRLKHRGVICEKCGVEVTQTKVRRERMGHIELASPTAHIWFLKSLPSRIGLLLDMPLRDIERVLYFESYVVIEGGMTNLERQQILTEEQYLDALEEFGDEFDAKMGAEAIQALLKSMDLEQECEQLREELNETNSETKRKKLTKRIKLLEAFVQSGNKPEWMILTVLPVLPPDLRPLVPLDGGRFATSDLNDLYRRVINRNNRLKRLLDLAAPDIIVRNEKRMLQEAVDALLDNGRRGRAITGSNKRPLKSLADMIKGKQGRFRQNLLGKRVDYSGRSVITVGPYLRLHQCGLPKKMALELFKPFIYGKLELRGLATTIKAAKKMVEREEAVVWDILDEVIREHPVLLNRAPTLHRLGIQAFEPVLIEGKAIQLHPLVCAAYNADFDGDQMAVHVPLTLEAQLEARALMMSTNNILSPANGEPIIVPSQDVVLGLYYMTRDCVNAKGEGMVLTGPKEAERLYRSGLASLHARVKVRITEYEKDANGELVAKTSLKDTTVGRAILWMIVPKGLPYSIVNQALGKKAISKMLNTCYRILGLKPTVIFADQIMYTGFAYAARSGASVGIDDMVIPEKKHEIISEAEAEVAEIQEQFQSGLVTAGERYNKVIDIWAAANDRVSKAMMDNLQTETVINRDGQEEKQVSFNSIYMMADSGARGSAAQIRQLAGMRGLMAKPDGSIIETPITANFREGLNVLQYFISTHGARKGLADTALKTANSGYLTRRLVDVAQDLVVTEDDCGTHEGIMMTPVIEGGDVKEPLRDRVLGRVTAEDVLKPGTADILVPRNTLLHEQWCDLLEENSVDAVKVRSVVSCDTDFGVCAYCYGRDLARGHIINKGEAIGVIAAQSIGEPGTQLTMRTFHIGGAASRAAAESSIQVKNKGSIKLSNVKSVVNSSGKLVITSRNTELKLIDEFGRTKESYKVPYGAVLAKGDGEQVAGGETVANWDPHTMPVITEVSGFVRFTDMIDGQTITRQTDELTGLSSLVVLDSAERTAGGKDLRPALKIVDAQGNDVLIPGTDMPAQYFLPGKAIVQLEDGVQISSGDTLARIPQESGGTKDITGGLPRVADLFEARRPKEPAILAEISGIVSFGKETKGKRRLVITPVDGSDPYEEMIPKWRQLNVFEGERVERGDVISDGPEAPHDILRLRGVHAVTRYIVNEVQDVYRLQGVKINDKHIEVIVRQMLRKATIVNAGSSDFLEGEQVEYSRVKIANRELEANGKVGATYSRDLLGITKASLATESFISAASFQETTRVLTEAAVAGKRDELRGLKENVIVGRLIPAGTGYAYHQDRMRRRAAGEAPAAPQVTAEDASASLAELLNAGLGGSDNE.

Residues C70, C72, C85, and C88 each contribute to the Zn(2+) site. Positions 460, 462, and 464 each coordinate Mg(2+). C814, C888, C895, and C898 together coordinate Zn(2+). K972 is subject to N6-acetyllysine.

Belongs to the RNA polymerase beta' chain family. The RNAP catalytic core consists of 2 alpha, 1 beta, 1 beta' and 1 omega subunit. When a sigma factor is associated with the core the holoenzyme is formed, which can initiate transcription. Mg(2+) serves as cofactor. The cofactor is Zn(2+).

The catalysed reaction is RNA(n) + a ribonucleoside 5'-triphosphate = RNA(n+1) + diphosphate. DNA-dependent RNA polymerase catalyzes the transcription of DNA into RNA using the four ribonucleoside triphosphates as substrates. This is DNA-directed RNA polymerase subunit beta' from Shigella boydii serotype 18 (strain CDC 3083-94 / BS512).